The chain runs to 264 residues: 14-3-3 protein homolog (264 aa).

The span at 236-258 (SEAPAATEEQQQSSQAPAAQPTE) shows a compositional bias: low complexity. Positions 236 to 264 (SEAPAATEEQQQSSQAPAAQPTEGKADQE) are disordered.

It belongs to the 14-3-3 family.

The sequence is that of 14-3-3 protein homolog (BMH1) from Candida albicans (strain SC5314 / ATCC MYA-2876) (Yeast).